Here is a 520-residue protein sequence, read N- to C-terminus: Cytochrome P450 monooxygenase 176 (520 aa).

N6 carries an N-linked (GlcNAc...) asparagine glycan. A helical transmembrane segment spans residues 10 to 27 (LLVVAGALFLTFLTTRFI). N-linked (GlcNAc...) asparagine glycans are attached at residues N141 and N270. C445 contacts heme. N-linked (GlcNAc...) asparagine glycosylation occurs at N517.

The protein belongs to the cytochrome P450 family. The cofactor is heme.

It localises to the membrane. It participates in secondary metabolite biosynthesis. In terms of biological role, cytochrome P450 monooxygenase that is able to use delta(6)-protoilludene as a substrate to produce delta(6)-protoilludene-5-ol and an unidentified hydroxyprotoilludene. Is also able to use phenanthrene as a substrate for oxidation. The chain is Cytochrome P450 monooxygenase 176 from Postia placenta (strain ATCC 44394 / Madison 698-R) (Brown rot fungus).